The following is a 140-amino-acid chain: Myrosinase 2 (140 aa).

The Nucleophile role is filled by Arg-70. Residues Asn-114 and Asn-127 are each glycosylated (N-linked (GlcNAc...) asparagine).

Belongs to the glycosyl hydrolase 1 family. In terms of assembly, homodimer.

The enzyme catalyses a thioglucoside + H2O = a sugar + a thiol.. Its activity is regulated as follows. Inhibited by ascorbate. In terms of biological role, degradation of glucosinolates (glucose residue linked by a thioglucoside bound to an amino acid derivative) to glucose, sulfate and any of the products: thiocyanates, isothiocyanates, nitriles, epithionitriles or oxazolidine-2-thiones. This chain is Myrosinase 2, found in Brevicoryne brassicae (Mealy cabbage aphid).